A 325-amino-acid chain; its full sequence is NADH-quinone oxidoreductase subunit H (325 aa).

Helical transmembrane passes span 11–31 (ILLSILKAVVILLVVVTCGAF), 50–69 (NRVGWGGSLQLVADMIKMFF), 81–101 (VIFTLAPMIAFTSLLLAFAIV), 114–134 (IGILFFLMMAGLAVYAVLFAG), 154–174 (LSYEVFLGLSLMGVVAQAGSF), 186–206 (IWNVIPQFFGFVTFAIAGVAV), 237–257 (FFVGEYIGIVTISALMVTLFF), 265–285 (LPPFIWFALKTAFFMMMFILI), and 304–324 (VCLPLTLINLLVTAAVILWQA).

It belongs to the complex I subunit 1 family. In terms of assembly, NDH-1 is composed of 13 different subunits. Subunits NuoA, H, J, K, L, M, N constitute the membrane sector of the complex.

Its subcellular location is the cell inner membrane. The enzyme catalyses a quinone + NADH + 5 H(+)(in) = a quinol + NAD(+) + 4 H(+)(out). NDH-1 shuttles electrons from NADH, via FMN and iron-sulfur (Fe-S) centers, to quinones in the respiratory chain. The immediate electron acceptor for the enzyme in this species is believed to be ubiquinone. Couples the redox reaction to proton translocation (for every two electrons transferred, four hydrogen ions are translocated across the cytoplasmic membrane), and thus conserves the redox energy in a proton gradient. This subunit may bind ubiquinone. This is NADH-quinone oxidoreductase subunit H from Citrobacter koseri (strain ATCC BAA-895 / CDC 4225-83 / SGSC4696).